The chain runs to 239 residues: Guanylate kinase (239 aa).

The 179-residue stretch at 19–197 (GLLIVVTGAS…AVSELLAVQQ (179 aa)) folds into the Guanylate kinase-like domain. Residue 26–33 (GASGVGKG) coordinates ATP.

Belongs to the guanylate kinase family.

The protein resides in the cytoplasm. It catalyses the reaction GMP + ATP = GDP + ADP. Its function is as follows. Essential for recycling GMP and indirectly, cGMP. The chain is Guanylate kinase (gmk) from Deinococcus radiodurans (strain ATCC 13939 / DSM 20539 / JCM 16871 / CCUG 27074 / LMG 4051 / NBRC 15346 / NCIMB 9279 / VKM B-1422 / R1).